The sequence spans 346 residues: Peroxidase 37 (346 aa).

The signal sequence occupies residues 1–22 (MHSSLIKLGFLLLLIQVSLSHA). Residue glutamine 23 is modified to Pyrrolidone carboxylic acid. Disulfide bonds link cysteine 33–cysteine 113, cysteine 66–cysteine 71, cysteine 119–cysteine 323, and cysteine 199–cysteine 231. Histidine 64 functions as the Proton acceptor in the catalytic mechanism. The Ca(2+) site is built by aspartate 65, valine 68, glycine 70, aspartate 72, and serine 74. Asparagine 79 is a glycosylation site (N-linked (GlcNAc...) asparagine). Proline 161 is a binding site for substrate. Histidine 192 lines the heme b pocket. Threonine 193 contributes to the Ca(2+) binding site. N-linked (GlcNAc...) asparagine glycans are attached at residues asparagine 208 and asparagine 236. Ca(2+)-binding residues include aspartate 244, threonine 247, and aspartate 252.

This sequence belongs to the peroxidase family. Classical plant (class III) peroxidase subfamily. Heme b serves as cofactor. Ca(2+) is required as a cofactor.

It localises to the secreted. It is found in the vacuole. The catalysed reaction is 2 a phenolic donor + H2O2 = 2 a phenolic radical donor + 2 H2O. Its function is as follows. Removal of H(2)O(2), oxidation of toxic reductants, biosynthesis and degradation of lignin, suberization, auxin catabolism, response to environmental stresses such as wounding, pathogen attack and oxidative stress. These functions might be dependent on each isozyme/isoform in each plant tissue. In Arabidopsis thaliana (Mouse-ear cress), this protein is Peroxidase 37 (PER37).